The primary structure comprises 433 residues: MDNNYNDNVNGWAEMEPSQPMGGLRLPTQNMDPPEQNNESQLSELPRMKIDNDYASPIERQSVITSGTNNYEPKVETVTSFFHTGIDYSNFGMLDQTTMQPFYPLYSGIPVNTLGTFSGYTNSIYDKPSLYDPSIPTINIPSTYPTVAPTYECVKCSQSCGAGMKAVNGGMMCVNCSTPKTTYSPPVAYSTSLGQPPILEIPSEQPTAKIAKQSSKKSSSSNRGSNGSASRRQGLVCSNCNGTNTTLWRRNAEGDPVCNACGLYFKLHHIPRPTSMKKEGALQTRKRKSKSGDSSTPSTSRARERKFERASSSTEKAQRSSNRRAGSAKADRELSTAAVAAATATYVSHADLYPVSSAAVTLPDQTYSNYYQWNTAATAGLMMVPNDQNYVYAATNYQTGLRPADNIQVHVMPVQDDETKAAARDLEAVDGDS.

Disordered regions lie at residues 1-47 (MDNN…ELPR) and 194-235 (GQPP…RQGL). Polar residues predominate over residues 27–43 (PTQNMDPPEQNNESQLS). The span at 211–234 (AKQSSKKSSSSNRGSNGSASRRQG) shows a compositional bias: low complexity. A GATA-type zinc finger spans residues 237-261 (CSNCNGTNTTLWRRNAEGDPVCNAC). A disordered region spans residues 275–332 (SMKKEGALQTRKRKSKSGDSSTPSTSRARERKFERASSSTEKAQRSSNRRAGSAKADR). Over residues 310–324 (ASSSTEKAQRSSNRR) the composition is skewed to polar residues.

Interacts with lag-1. Interacts with pha-4. Interacts with rpt-6. May be ubiquitinated in response to infection by B.pseudomallei. In terms of tissue distribution, expressed in the intestine.

The protein resides in the nucleus. Transcriptional activator that binds to the consensus sequence 5'-[AT]GATA[AG]-3'. Predominantly directs the transcription of intestinal genes such as ges-1, cpr-6, pho-1, ftn-1, vit-2 and lev-11, and itself. Required for gut-specific differentiation, specifically acting with the GATA region-binding transcription factor elt-7 to control normal gene expression and promote normal formation of the intestine. Regulates intestinal gene expression in response to hypoxia to promote longevity. Modulation of longevity may, in part, be the result of regulation of expression of daf-16 isoforms d and f in the intestine. Regulates tissue specific gene expression at basal levels and in response to bacterial infection in the intestine to control innate immunity. Plays a role in the induction of metal-responsive genes, activating gene expression from zinc-activated promoters and iron-dependent promoters and enhancers. May regulate the expression of genes that control sensitivity to oxidative stress, in a mab-3-dependent manner, and osmotic stress, in conjunction with the GATA region-binding transcription factor elt-3. May play a role in sphingolipid signaling by regulating the expression of the sphingosine-1-phosphate degrading enzyme, sphingosine-1-phosphate lyase. May act with the Notch signaling pathway to promote endodermal gene expression. Has a protective role in response to infection by Gram-negative bacteria such as S.enterica, E.coli, P.aeruginosa and B.pseudomallei, Gram-positive bacterium E.faecalis and fungal pathogen C.neoformans. An association with the 26S proteasome regulatory subunit rpt-6, in part, controls gene expression in response to infection by P.aeruginosa. Regulates gene expression during the recovery phase following a bacterial infection. May act with p38-activated transcription factors to control p38 gene induction in response to bacterial infection. Controls lysosome formation in the intestine by controlling lysosomal gene expression. The polypeptide is Transcription factor elt-2 (Caenorhabditis elegans).